The following is a 556-amino-acid chain: Formate--tetrahydrofolate ligase (556 aa).

An ATP-binding site is contributed by 65-72; it reads TPAGEGKT.

Belongs to the formate--tetrahydrofolate ligase family.

The catalysed reaction is (6S)-5,6,7,8-tetrahydrofolate + formate + ATP = (6R)-10-formyltetrahydrofolate + ADP + phosphate. Its pathway is one-carbon metabolism; tetrahydrofolate interconversion. The sequence is that of Formate--tetrahydrofolate ligase from Acetivibrio thermocellus (strain ATCC 27405 / DSM 1237 / JCM 9322 / NBRC 103400 / NCIMB 10682 / NRRL B-4536 / VPI 7372) (Clostridium thermocellum).